The sequence spans 379 residues: UDP-4-amino-4-deoxy-L-arabinose--oxoglutarate aminotransferase (379 aa).

N6-(pyridoxal phosphate)lysine is present on lysine 182.

The protein belongs to the DegT/DnrJ/EryC1 family. ArnB subfamily. In terms of assembly, homodimer. Pyridoxal 5'-phosphate is required as a cofactor.

It catalyses the reaction UDP-4-amino-4-deoxy-beta-L-arabinose + 2-oxoglutarate = UDP-beta-L-threo-pentopyranos-4-ulose + L-glutamate. Its pathway is nucleotide-sugar biosynthesis; UDP-4-deoxy-4-formamido-beta-L-arabinose biosynthesis; UDP-4-deoxy-4-formamido-beta-L-arabinose from UDP-alpha-D-glucuronate: step 2/3. The protein operates within bacterial outer membrane biogenesis; lipopolysaccharide biosynthesis. Functionally, catalyzes the conversion of UDP-4-keto-arabinose (UDP-Ara4O) to UDP-4-amino-4-deoxy-L-arabinose (UDP-L-Ara4N). The modified arabinose is attached to lipid A and is required for resistance to polymyxin and cationic antimicrobial peptides. The polypeptide is UDP-4-amino-4-deoxy-L-arabinose--oxoglutarate aminotransferase (Klebsiella pneumoniae (strain 342)).